The chain runs to 156 residues: Small ribosomal subunit protein uS7 (156 aa).

Belongs to the universal ribosomal protein uS7 family. Part of the 30S ribosomal subunit. Contacts proteins S9 and S11.

Functionally, one of the primary rRNA binding proteins, it binds directly to 16S rRNA where it nucleates assembly of the head domain of the 30S subunit. Is located at the subunit interface close to the decoding center, probably blocks exit of the E-site tRNA. The protein is Small ribosomal subunit protein uS7 of Synechococcus sp. (strain CC9605).